Here is a 296-residue protein sequence, read N- to C-terminus: Nitrogenase iron protein (296 aa).

11-18 (GKGGIGKS) is an ATP binding site. Cysteine 99 provides a ligand contact to [4Fe-4S] cluster. Arginine 102 carries the post-translational modification ADP-ribosylarginine; by dinitrogenase reductase ADP-ribosyltransferase. Position 133 (cysteine 133) interacts with [4Fe-4S] cluster.

Belongs to the NifH/BchL/ChlL family. Homodimer. Requires [4Fe-4S] cluster as cofactor. In terms of processing, the reversible ADP-ribosylation of Arg-102 inactivates the nitrogenase reductase and regulates nitrogenase activity.

It catalyses the reaction N2 + 8 reduced [2Fe-2S]-[ferredoxin] + 16 ATP + 16 H2O = H2 + 8 oxidized [2Fe-2S]-[ferredoxin] + 2 NH4(+) + 16 ADP + 16 phosphate + 6 H(+). Functionally, the key enzymatic reactions in nitrogen fixation are catalyzed by the nitrogenase complex, which has 2 components: the iron protein and the molybdenum-iron protein. The polypeptide is Nitrogenase iron protein (nifH1) (Sinorhizobium fredii (strain NBRC 101917 / NGR234)).